A 247-amino-acid polypeptide reads, in one-letter code: uncharacterized protein (247 aa).

Positions 70 to 205 (ISLWMGPGNN…QKVPLEIMIR (136 aa)) constitute an N-acetyltransferase domain.

The protein belongs to the acetyltransferase family.

It localises to the endoplasmic reticulum. It is found in the golgi apparatus. The protein localises to the vacuole. This is an uncharacterized protein from Schizosaccharomyces pombe (strain 972 / ATCC 24843) (Fission yeast).